Here is a 186-residue protein sequence, read N- to C-terminus: Inner membrane-spanning protein YciB (186 aa).

Transmembrane regions (helical) follow at residues isoleucine 10 to isoleucine 30, valine 47 to leucine 67, tryptophan 76 to phenylalanine 96, tryptophan 121 to phenylalanine 141, and phenylalanine 149 to leucine 169.

It belongs to the YciB family.

The protein localises to the cell inner membrane. Plays a role in cell envelope biogenesis, maintenance of cell envelope integrity and membrane homeostasis. The sequence is that of Inner membrane-spanning protein YciB from Acidovorax sp. (strain JS42).